The chain runs to 128 residues: Ribonuclease pancreatic (128 aa).

The disordered stretch occupies residues 1–25; the sequence is KESSAKKFQRQHIDSSGSPSTNPNY. Residues K7 and R10 each contribute to the substrate site. H12 acts as the Proton acceptor in catalysis. Over residues 14-25 the composition is skewed to polar residues; it reads DSSGSPSTNPNY. Disulfide bonds link C26–C84, C40–C95, C58–C110, and C65–C72. A glycan (N-linked (GlcNAc...) asparagine) is linked at N34. Substrate is bound by residues 41-45, K66, and R85; that span reads KPVNT. H119 (proton donor) is an active-site residue.

The protein belongs to the pancreatic ribonuclease family. Monomer. Interacts with and forms tight 1:1 complexes with RNH1. Dimerization of two such complexes may occur. Interaction with RNH1 inhibits this protein. As to expression, pancreas.

It localises to the secreted. It catalyses the reaction an [RNA] containing cytidine + H2O = an [RNA]-3'-cytidine-3'-phosphate + a 5'-hydroxy-ribonucleotide-3'-[RNA].. The catalysed reaction is an [RNA] containing uridine + H2O = an [RNA]-3'-uridine-3'-phosphate + a 5'-hydroxy-ribonucleotide-3'-[RNA].. Endonuclease that catalyzes the cleavage of RNA on the 3' side of pyrimidine nucleotides. Acts on single-stranded and double-stranded RNA. In Proechimys guairae (Guaira spiny rat), this protein is Ribonuclease pancreatic (RNASE1).